The chain runs to 694 residues: Junctophilin-2 (694 aa).

Over 1 to 672 (MSGGRFDFDD…EVEVEEVPNT (672 aa)) the chain is Cytoplasmic. 6 MORN repeats span residues 14-36 (YCGG…KGQG), 38-59 (YSGS…SGNT), 60-79 (FEGY…TKGR), 82-104 (YKGE…SSGA), 106-128 (YEGT…DGGT), and 129-151 (YQGQ…PYGM). A phosphoserine mark is found at S162 and S165. Disordered regions lie at residues 164–192 (SSLR…ALPS) and 231–278 (RAES…AAPF). Over residues 176–189 (APDSPASPAADGPA) the composition is skewed to low complexity. Over residues 235-244 (RTSVGSQRSR) the composition is skewed to polar residues. Positions 250 to 267 (SDLSSGASDAASTASLGE) are enriched in low complexity. MORN repeat units lie at residues 290–312 (YMGE…SGLR) and 313–335 (YEGE…DGHR). A Bipartite nuclear localization signal motif is present at residues 350–364 (KRRVLPLKSNKVRQK). A phosphoserine mark is found at S445, S447, and S466. The disordered stretch occupies residues 448 to 663 (LLEPPDRGAA…KEAAQAAEAE (216 aa)). Residues 467–476 (PQLHERETPR) show a composition bias toward basic and acidic residues. The residue at position 474 (T474) is a Phosphothreonine. The segment covering 478-491 (EGGPPSPAGTPPQP) has biased composition (pro residues). Residue S483 is modified to Phosphoserine. T487 bears the Phosphothreonine mark. A Nuclear localization signal motif is present at residues 492 to 496 (KRPRP). A compositionally biased stretch (low complexity) spans 522–540 (SRPATPAAAGAGRRSPARP). Phosphoserine is present on residues S536, S542, S596, and S600. The span at 589-610 (PEAADPDSAPASPATAPGQAPA) shows a compositional bias: low complexity. The helical; Anchor for type IV membrane protein transmembrane segment at 673–693 (VLICMVILLNIGLAILFVHLL) threads the bilayer.

The protein belongs to the junctophilin family. As to quaternary structure, interacts with TRPC3. Interacts with BAG5 and HSPA8; the interaction with HSPA8 is increased in the presence of BAG5. Junctophilin-2 N-terminal fragment: Interacts with MEF2C. In terms of processing, proteolytically cleaved by calpain in response to cardiac stress. The major cleavage site takes place at the C-terminus and leads to the release of the Junctophilin-2 N-terminal fragment chain (JP2NT). Post-translationally, phosphorylation on Ser-165, probably by PKC, affects RYR1-mediated calcium ion release, interaction with TRPC3, and skeletal muscle myotubule development.

The protein resides in the cell membrane. It is found in the sarcoplasmic reticulum membrane. The protein localises to the endoplasmic reticulum membrane. It localises to the nucleus. In terms of biological role, membrane-binding protein that provides a structural bridge between the plasma membrane and the sarcoplasmic reticulum and is required for normal excitation-contraction coupling in cardiomyocytes. Provides a structural foundation for functional cross-talk between the cell surface and intracellular Ca(2+) release channels by maintaining the 12-15 nm gap between the sarcolemma and the sarcoplasmic reticulum membranes in the cardiac dyads. Necessary for proper intracellular Ca(2+) signaling in cardiac myocytes via its involvement in ryanodine receptor-mediated calcium ion release. Contributes to the construction of skeletal muscle triad junctions. Transcription repressor required to safeguard against the deleterious effects of cardiac stress. Generated following cleavage of the Junctophilin-2 chain by calpain in response to cardiac stress in cardiomyocytes. Following cleavage and release from the membrane, translocates to the nucleus, binds DNA and represses expression of genes implicated in cell growth and differentiation, hypertrophy, inflammation and fibrosis. Modifies the transcription profile and thereby attenuates pathological remodeling in response to cardiac stress. Probably acts by competing with MEF2 transcription factors and TATA-binding proteins. The polypeptide is Junctophilin-2 (JPH2) (Oryctolagus cuniculus (Rabbit)).